We begin with the raw amino-acid sequence, 293 residues long: DDRGK domain-containing protein 1 (293 aa).

Over 1–6 the chain is Lumenal; the sequence is MWGPLI. The chain crosses the membrane as a helical span at residues 7 to 27; that stretch reads YALLGLAIVAAAFLFVRRSQA. Residues 28–293 are Cytoplasmic-facing; sequence KEVVPVADDD…PADVDETTTA (266 aa). Disordered stretches follow at residues 30–151 and 273–293; these read VVPV…RQKE and TDVE…TTTA. Composition is skewed to basic and acidic residues over residues 90–126 and 133–151; these read KLQE…KERE and ERQR…RQKE.

It belongs to the DDRGK1 family.

The protein localises to the endoplasmic reticulum membrane. Substrate adapter for ufmylation, the covalent attachment of the ubiquitin-like modifier UFM1 to substrate proteins. In Monosiga brevicollis (Choanoflagellate), this protein is DDRGK domain-containing protein 1.